Consider the following 542-residue polypeptide: Multidrug transporter DTR1 (542 aa).

Asn6 and Asn46 each carry an N-linked (GlcNAc...) asparagine glycan. Residues 80 to 100 (LIFLIVIYNGFLGPLAGNVFI) traverse the membrane as a helical segment. 2 N-linked (GlcNAc...) asparagine glycosylation sites follow: Asn111 and Asn118. 5 helical membrane-spanning segments follow: residues 119 to 139 (ATVS…GALA), 146 to 166 (ILYI…ASVP), 169 to 189 (IGSL…VISL), 210 to 230 (FMLG…LILL), and 237 to 257 (WLFG…ILLL). A glycan (N-linked (GlcNAc...) asparagine) is linked at Asn274. Helical transmembrane passes span 332-352 (IMTF…FCTY), 374-394 (IGAC…IGGH), 419-439 (ILTV…GWCI), and 441-461 (FHYH…GLTW). Asn463 carries N-linked (GlcNAc...) asparagine glycosylation. The next 2 membrane-spanning stretches (helical) occupy residues 481–501 (AIAV…ALIA) and 511–531 (FCFL…LVLI).

It belongs to the major facilitator superfamily. CAR1 family.

The protein localises to the cell membrane. Its function is as follows. Plasma membrane acetic acid exporter, relieving the stress induced upon cells within hemocytes, and thus enabling increased proliferation and virulence against Galleria mellonella larvae. Confers resistance to weak acid and oxidative stress, but not to antifungal drugs. The chain is Multidrug transporter DTR1 from Candida glabrata (strain ATCC 2001 / BCRC 20586 / JCM 3761 / NBRC 0622 / NRRL Y-65 / CBS 138) (Yeast).